Here is a 399-residue protein sequence, read N- to C-terminus: Putative 8-amino-7-oxononanoate synthase (399 aa).

Arg-23 contributes to the substrate binding site. Residue 110–111 (GY) coordinates pyridoxal 5'-phosphate. His-135 provides a ligand contact to substrate. Residues Ser-183, 208-211 (DEAH), and 239-242 (TLSK) each bind pyridoxal 5'-phosphate. At Lys-242 the chain carries N6-(pyridoxal phosphate)lysine. Residue Thr-364 coordinates substrate.

This sequence belongs to the class-II pyridoxal-phosphate-dependent aminotransferase family. BioF subfamily. Homodimer. Pyridoxal 5'-phosphate serves as cofactor.

It carries out the reaction 6-carboxyhexanoyl-[ACP] + L-alanine + H(+) = (8S)-8-amino-7-oxononanoate + holo-[ACP] + CO2. Its pathway is cofactor biosynthesis; biotin biosynthesis. Its function is as follows. Catalyzes the decarboxylative condensation of pimeloyl-[acyl-carrier protein] and L-alanine to produce 8-amino-7-oxononanoate (AON), [acyl-carrier protein], and carbon dioxide. This chain is Putative 8-amino-7-oxononanoate synthase (bioF), found in Cyanothece sp. (strain PCC 7425 / ATCC 29141).